The primary structure comprises 109 residues: RYamide neuropeptides (109 aa).

The N-terminal stretch at 1-22 (MNECVNKLLHLKFLFYFILGIQ) is a signal peptide. Tyrosine amide is present on Tyr33. A propeptide spanning residues 36–53 (STTYDESLKSRRIFIVPR) is cleaved from the precursor. Tyr63 carries the post-translational modification Tyrosine amide. Residues 67 to 109 (SGKYLCLSREINKLIVRKRLRNNDKERTPTLSFITKHFLMRNT) constitute a propeptide that is removed on maturation.

The protein localises to the secreted. Functionally, neuropeptides RYamide-1 and RYamide-2 are ligands for the G-protein coupled receptor RYa-R. May suppress feeding behavior. In Drosophila melanogaster (Fruit fly), this protein is RYamide neuropeptides.